A 282-amino-acid chain; its full sequence is MSLTDDQASKRQAYRAAKEANRKELKHVKIDDALPNKSSELDLPKKKFYRQRAHSNPFSDHQLEYPLSPAEMDWSKLYPHYYDAATNTMTKKVTVADIGCGYGGLMVELSRELPENLILGMEIRVQVTNYVEDRIIALRTNHAAQKEYQNINVLRGNAMKFLPNFFEKSQLEKMFFCFPDPHFKQRKHKARIITNTLLSEYAYVLKEGGVIYTITDVLDLHNWMVEHLNMHPLFDRLGDEWLDQDPCVRIMRHATEEGKKVARKQGDKFVACFRRLPNPELV.

The tract at residues Met1 to Asp31 is disordered. Residues Ala16–Asp31 are compositionally biased toward basic and acidic residues. S-adenosyl-L-methionine-binding positions include Gly99, Glu122–Ile123, Asn157–Ala158, and Cys177. Residue Asp180 is part of the active site. Thr255–Glu257 provides a ligand contact to S-adenosyl-L-methionine.

It belongs to the class I-like SAM-binding methyltransferase superfamily. TrmB family. Forms a complex with TRM82.

The protein resides in the nucleus. The enzyme catalyses guanosine(46) in tRNA + S-adenosyl-L-methionine = N(7)-methylguanosine(46) in tRNA + S-adenosyl-L-homocysteine. It participates in tRNA modification; N(7)-methylguanine-tRNA biosynthesis. In terms of biological role, catalyzes the formation of N(7)-methylguanine at position 46 (m7G46) in tRNA. This is tRNA (guanine-N(7)-)-methyltransferase from Eremothecium gossypii (strain ATCC 10895 / CBS 109.51 / FGSC 9923 / NRRL Y-1056) (Yeast).